Here is a 207-residue protein sequence, read N- to C-terminus: Ribosomal RNA small subunit methyltransferase G (207 aa).

S-adenosyl-L-methionine is bound by residues G73, L78, 124–125 (VE), and R139.

It belongs to the methyltransferase superfamily. RNA methyltransferase RsmG family.

It is found in the cytoplasm. It carries out the reaction guanosine(527) in 16S rRNA + S-adenosyl-L-methionine = N(7)-methylguanosine(527) in 16S rRNA + S-adenosyl-L-homocysteine. In terms of biological role, specifically methylates the N7 position of guanine in position 527 of 16S rRNA. The protein is Ribosomal RNA small subunit methyltransferase G of Klebsiella pneumoniae (strain 342).